We begin with the raw amino-acid sequence, 479 residues long: MAQHTVYFPDAFLTQMREAMPSTLSFDDFLAACQRPLRRSIRVNTLKTSVADFLQLTAPYGWTLTPIPWCEEGFWIERDSEDALPLGSTAEHLSGLFYIQEASSMLPVAALFADGNAPQRVMDVAAAPGSKTTQIAARMNNEGAILANEFSASRVKVLHANISRCGISNVALTHFDGRVFGAAVPEMFDAILLDAPCSGEGVVRKDPDALKNWSPESNQEIAATQRELIDSAFHALRPGGTLVYSTCTLNREENEAVCLWLKETYPDAVEFLPLGDLFPGANKALTEEGFLHVFPQIYDCEGFFVARLRKTQAIPVLPAPKYKVGNFPFSPVKDREAGQIRQAAASVGLNWDENLRLWQRDKELWLFPVGIEALIGKVRFSRLGIKLAETHNKGYRWQHEAVIALASPDNVNAFELTPQEAEEWYRGRDVYPQAAPVADDVLVTFQHQPIGLAKRIGSRLKNSYPRELVRDGKLFTGNA.

S-adenosyl-L-methionine-binding positions include 125–131 (AAAPGSK), Glu149, Asp176, and Asp194. Catalysis depends on Cys247, which acts as the Nucleophile.

The protein belongs to the class I-like SAM-binding methyltransferase superfamily. RsmB/NOP family.

The protein localises to the cytoplasm. It catalyses the reaction cytidine(1407) in 16S rRNA + S-adenosyl-L-methionine = 5-methylcytidine(1407) in 16S rRNA + S-adenosyl-L-homocysteine + H(+). Its function is as follows. Specifically methylates the cytosine at position 1407 (m5C1407) of 16S rRNA. The protein is Ribosomal RNA small subunit methyltransferase F of Escherichia coli O127:H6 (strain E2348/69 / EPEC).